The sequence spans 128 residues: Disintegrin gabonin-1 (128 aa).

The first 20 residues, 1-20 (MIQVLLVIICLAVFPYQGSS), serve as a signal peptide directing secretion. A propeptide spanning residues 21-47 (IILESGNVNDYEIVYPKKVTVLPTGAM) is cleaved from the precursor. Residues 47–112 (MNSAHPCCDP…DCPRNPNKGE (66 aa)) enclose the Disintegrin domain. 4 disulfide bridges follow: cysteine 53-cysteine 76, cysteine 67-cysteine 73, cysteine 72-cysteine 97, and cysteine 85-cysteine 104. Residues 89–91 (RGD) carry the Cell attachment site motif. The tract at residues 108 to 128 (PNKGESDELEWSAAATGSVLM) is disordered.

It belongs to the disintegrin family. Dimeric disintegrin subfamily. Heterodimer with bitisgabonin (bitisgabonin-1 is the name of the heterodimer); disulfide-linked. As to expression, expressed by the venom gland.

The protein resides in the secreted. Its function is as follows. The heterodimer bitisgabonin-1 is a potent inhibitor of the adhesion of the RGD-dependent integrin alpha-5/beta-1 (ITGA5/ITGB1) to immobilized fibronectin. This is Disintegrin gabonin-1 from Bitis gabonica (Gaboon adder).